The sequence spans 75 residues: MAGQEDPVQREIHQDWANREYIEIITSSIKKIADFLNSFDMSCRSRLATLNEKLTALERRIEYIEARVTKGETLT.

Residue A2 is modified to N-acetylalanine. Positions 41-72 (MSCRSRLATLNEKLTALERRIEYIEARVTKGE) form a coiled coil.

It belongs to the BRK1 family. In terms of assembly, homotrimer when in free form. Directly interacts with WASF2. Component of the WAVE1 complex composed of ABI2, CYFIP1 or CYFIP2, BRK1, NCKAP1 and WASF1/WAVE1. Within the complex, a heterodimer containing NCKAP1 and CYFIP1 interacts with a heterotrimer formed by WAVE1, ABI2 and BRK1.

The protein localises to the cytoplasm. The protein resides in the cytoskeleton. Functionally, involved in regulation of actin and microtubule organization. Part of a WAVE complex that activates the Arp2/3 complex. As component of the WAVE1 complex, required for BDNF-NTRK2 endocytic trafficking and signaling from early endosomes. In Homo sapiens (Human), this protein is Protein BRICK1 (BRK1).